The chain runs to 261 residues: Proteasome subunit alpha type-4 (261 aa).

Phosphoserine is present on residues S13 and S75. K127 carries the N6-acetyllysine modification. S173 is subject to Phosphoserine. Position 176 is an N6-acetyllysine (K176). Residues 240-261 (HEEEEAKAEREKKEKEQKEKDK) are disordered.

The protein belongs to the peptidase T1A family. In terms of assembly, the 26S proteasome consists of a 20S proteasome core and two 19S regulatory subunits. The 20S proteasome core is a barrel-shaped complex made of 28 subunits that are arranged in four stacked rings. The two outer rings are each formed by seven alpha subunits, and the two inner rings are formed by seven beta subunits. The proteolytic activity is exerted by three beta-subunits PSMB5, PSMB6 and PSMB7.

The protein resides in the cytoplasm. It is found in the nucleus. Its function is as follows. Component of the 20S core proteasome complex involved in the proteolytic degradation of most intracellular proteins. This complex plays numerous essential roles within the cell by associating with different regulatory particles. Associated with two 19S regulatory particles, forms the 26S proteasome and thus participates in the ATP-dependent degradation of ubiquitinated proteins. The 26S proteasome plays a key role in the maintenance of protein homeostasis by removing misfolded or damaged proteins that could impair cellular functions, and by removing proteins whose functions are no longer required. Associated with the PA200 or PA28, the 20S proteasome mediates ubiquitin-independent protein degradation. This type of proteolysis is required in several pathways including spermatogenesis (20S-PA200 complex) or generation of a subset of MHC class I-presented antigenic peptides (20S-PA28 complex). This chain is Proteasome subunit alpha type-4 (PSMA4), found in Macaca fascicularis (Crab-eating macaque).